The sequence spans 415 residues: MKGSYKSRWVIVIVVVIAAIAAFWFWQGRNDSRSAAPGATKQAQQSPAGGRRGMRSGPLAPVQAATAVEQAVPRYLTGLGTITAANTVTVRSRVDGQLMALHFQEGQQVKAGDLLAEIDPSQFKVALAQALGQLAKDKATLANARRDLARYQQLVKTNLVSRQELDAQQALVSETEGTIKADEASVASAQLQLDWSRITAPVDGRVGLKQVDVGNQISSGDTTGIVVITQTHPIDLVFTLPESDIATVVQAQKAGKPLVVEAWDRTNSKKLSEGTLLSLDNQIDATTGTIKVKARFNNQDDALFPNQFVNARMLVDTEQNAVVIPTAALQMGNEGHFVWVLNSENKVSKHLVTPGIQDSQRVVIRAGISAGDRVVTDGIDRLTEGAKVEVVEAQSATTSEEKATSREYAKKGARS.

The first 21 residues, 1–21 (MKGSYKSRWVIVIVVVIAAIA), serve as a signal peptide directing secretion. 2 disordered regions span residues 32-59 (SRSA…SGPL) and 392-415 (EAQS…GARS). The span at 399-415 (SEEKATSREYAKKGARS) shows a compositional bias: basic and acidic residues.

The protein belongs to the membrane fusion protein (MFP) (TC 8.A.1) family. Part of a tripartite efflux system composed of MdtA, MdtB and MdtC.

The protein resides in the cell inner membrane. Functionally, the MdtABC tripartite complex confers resistance against novobiocin and deoxycholate. This is Multidrug resistance protein MdtA from Escherichia coli (strain SMS-3-5 / SECEC).